Reading from the N-terminus, the 202-residue chain is Ribosomal RNA small subunit methyltransferase G (202 aa).

Residues glycine 75, phenylalanine 80, 125 to 126, and arginine 139 contribute to the S-adenosyl-L-methionine site; that span reads VQ.

The protein belongs to the methyltransferase superfamily. RNA methyltransferase RsmG family.

The protein localises to the cytoplasm. Functionally, specifically methylates the N7 position of a guanine in 16S rRNA. The sequence is that of Ribosomal RNA small subunit methyltransferase G from Mesomycoplasma hyopneumoniae (strain 232) (Mycoplasma hyopneumoniae).